Here is a 299-residue protein sequence, read N- to C-terminus: Circadian clock oscillator protein KaiA (299 aa).

Residues 9-148 are psR domain, binds oxidized quinones; it reads SRPQIFICTL…LQLSKACRLP (140 aa). Residues 9 to 179 form the KaiA N-terminal domain; sequence SRPQIFICTL…RLSQKLKERL (171 aa). The interval 180–188 is flexible linker; that stretch reads GYLGVYYKR. A KaiA C-terminal domain is found at 189–297; that stretch reads NPQQFFHKLT…CEMYRRSIPK (109 aa).

In terms of assembly, homodimer. The KaiABC complex composition changes during the circadian cycle to control KaiC phosphorylation. Complexes KaiC(6), KaiA(2-4):KaiC(6), KaiB(6):KaiC(6) and KaiC(6):KaiB(6):KaiA(12) are among the most important forms, many form cooperatively. KaiA and CikA bind to the same region of the KaiB(fs) form and therefore compete.

Its function is as follows. Key component of the KaiABC oscillator complex, which constitutes the main circadian regulator in cyanobacteria. Complex composition changes during the circadian cycle to control KaiC phosphorylation. KaiA stimulates KaiC autophosphorylation, while KaiB sequesters KaiA, leading to KaiC autodephosphorylation. KaiA binding to the KaiC CII domain during the subjective day yields KaiA(2-4):KaiC(6) complexes which stimulate KaiC autophosphorylation. Phospho-Ser-431 KaiC accumulation triggers binding of KaiB during the subjective night to form the KaiB(6):KaiC(6) complex, leading to changes in the output regulators CikA and SasA. KaiB(6):KaiC(6) formation exposes a site for KaiA binding on KaiB that sequesters KaiA from KaiC's CII domain, making the KaiC(6):KaiB(6):KaiA(12) complex resulting in KaiC autodephosphorylation. Complete dephosphorylation of KaiC leads to dissociation of KaiA(2):KaiB(1), completing 1 cycle of the Kai oscillator. Functionally, binds oxidized quinones via the N-terminal PsR domain, allowing it to sense redox changes and possibly mediate clock input. The protein is Circadian clock oscillator protein KaiA of Acaryochloris marina (strain MBIC 11017).